The primary structure comprises 203 residues: Small ribosomal subunit protein uS4 (203 aa).

One can recognise an S4 RNA-binding domain in the interval 93–154 (RRLDNVVFRA…KSRNMDAVTD (62 aa)).

Belongs to the universal ribosomal protein uS4 family. In terms of assembly, part of the 30S ribosomal subunit. Contacts protein S5. The interaction surface between S4 and S5 is involved in control of translational fidelity.

Functionally, one of the primary rRNA binding proteins, it binds directly to 16S rRNA where it nucleates assembly of the body of the 30S subunit. With S5 and S12 plays an important role in translational accuracy. This chain is Small ribosomal subunit protein uS4, found in Chlorobium luteolum (strain DSM 273 / BCRC 81028 / 2530) (Pelodictyon luteolum).